Reading from the N-terminus, the 68-residue chain is Large ribosomal subunit protein uL29 (68 aa).

It belongs to the universal ribosomal protein uL29 family.

This chain is Large ribosomal subunit protein uL29 (rpl29), found in Pyrococcus abyssi (strain GE5 / Orsay).